Here is a 314-residue protein sequence, read N- to C-terminus: Endo-beta-N-acetylglucosaminidase (314 aa).

An N-terminal signal peptide occupies residues 1 to 47 (MQFGIVAAIADGGRTARAGGSVRPPRRPPASHTAWGLPRGRPTGQPH). Residues 14-54 (RTARAGGSVRPPRRPPASHTAWGLPRGRPTGQPHATPTKSG) form a disordered region. One can recognise a GH18 domain in the interval 55 to 309 (PTSIAYVEVN…SSMTKVLYGQ (255 aa)). The active-site Proton donor is the Glu175.

Belongs to the glycosyl hydrolase 18 family. Monomer.

The protein resides in the secreted. The enzyme catalyses an N(4)-(oligosaccharide-(1-&gt;3)-[oligosaccharide-(1-&gt;6)]-beta-D-Man-(1-&gt;4)-beta-D-GlcNAc-(1-&gt;4)-alpha-D-GlcNAc)-L-asparaginyl-[protein] + H2O = an oligosaccharide-(1-&gt;3)-[oligosaccharide-(1-&gt;6)]-beta-D-Man-(1-&gt;4)-D-GlcNAc + N(4)-(N-acetyl-beta-D-glucosaminyl)-L-asparaginyl-[protein]. Its function is as follows. Cleaves asparagine-linked oligomannose and hybrid, but not complex, oligosaccharides from glycoproteins. The sequence is that of Endo-beta-N-acetylglucosaminidase from Flavobacterium sp. (strain SK1022).